We begin with the raw amino-acid sequence, 95 residues long: Protein TRACHEARY ELEMENT DIFFERENTIATION-RELATED 6 (95 aa).

Residues 1-3 are Extracellular-facing; it reads MAT. Residues 4–24 form a helical membrane-spanning segment; it reads IFIVFVSFGCVFVLGIAAFVL. Residues 25-95 are Cytoplasmic-facing; the sequence is CCLIKKWKCS…KLGTASTSKA (71 aa).

As to quaternary structure, interacts with the secondary cell wall (SCW)-related cellulose synthase complex. In terms of tissue distribution, accumulates in cells differentiating into tracheary element (TE) which undergo secondary cell wall (SCW) formation.

Its subcellular location is the cell membrane. It is found in the secreted. The protein resides in the cell wall. Functionally, involved in the secondary cell wall (SCW) formation of vessel elements (e.g. protoxylem and metaxylem), thus promoting tracheary element (TE) differentiation. The polypeptide is Protein TRACHEARY ELEMENT DIFFERENTIATION-RELATED 6 (Zinnia elegans (Garden zinnia)).